The following is a 92-amino-acid chain: MNRLQQRQLFLENLLVGVNSTFHQMQKLSINTCCRSLQRILDHLILHQTIHSPAFRLDRMQLRQMQMLACLWIHQHNHDHQVILDAIKWISP.

Belongs to the rotavirus A NSP6 family. In terms of assembly, interacts with NSP2 and NSP5.

It is found in the host cytoplasm. The protein localises to the host mitochondrion. The protein is Non-structural protein 6 of Rotavirus A (strain RVA/Human/Indonesia/69M/1980/G8P4[10]) (RV-A).